We begin with the raw amino-acid sequence, 475 residues long: MEQPSDSAPVYARRIMGIETEYGITASASNGQRVMSPDEIARVLFRPIVSKYSSSNIFSPNASRLYLDVGSHPEIATAECDSLSQLIAYERAGDAMVNRMAVQAEETLADEGEKRAVYLFKNNVDSAGNSYGCHENYLIGRHVVLKDLGKALLPFMITRQLICGVGMIRPAKGDDPACFVLSQRADQVWEGVSSATTRSRPIINTRDEPHGDSKRFRRMHVIVGDSNMAEPTMALKVGSTLLMLEMLEAGFEVPNLSVLEPIQHIRAIALDPTGRTELPLEGGGSTTALAVQQELCTAAERWLEHREEAGTPTTELARVVDLWKRTLQAIDTQDFSSVDREIDWVIKRSLLNRYRDRLGGDWAHPKLAQIDLTYHDIRPGRGLYSVLEQRGMVERWIDDAAIDAAIDTAPQTTRAKLRGEFLAVARELDAAVTVDWTRMKVNRPEPMTEEFSDPFVSEDPRLDGLLDYMRSHPGS.

E19 is a binding site for Mg(2+). Residue R64 participates in ATP binding. Residue Y66 coordinates Mg(2+). The Proton acceptor role is filled by D68. E74 contacts Mg(2+). T77 and W436 together coordinate ATP.

This sequence belongs to the Pup ligase/Pup deamidase family. Pup-conjugating enzyme subfamily.

It catalyses the reaction ATP + [prokaryotic ubiquitin-like protein]-L-glutamate + [protein]-L-lysine = ADP + phosphate + N(6)-([prokaryotic ubiquitin-like protein]-gamma-L-glutamyl)-[protein]-L-lysine.. It functions in the pathway protein degradation; proteasomal Pup-dependent pathway. It participates in protein modification; protein pupylation. Its function is as follows. Catalyzes the covalent attachment of the prokaryotic ubiquitin-like protein modifier Pup to the proteasomal substrate proteins, thereby targeting them for proteasomal degradation. This tagging system is termed pupylation. The ligation reaction involves the side-chain carboxylate of the C-terminal glutamate of Pup and the side-chain amino group of a substrate lysine. This Corynebacterium aurimucosum (strain ATCC 700975 / DSM 44827 / CIP 107346 / CN-1) (Corynebacterium nigricans) protein is Pup--protein ligase.